The following is a 129-amino-acid chain: Small ribosomal subunit protein uS11 (129 aa).

This sequence belongs to the universal ribosomal protein uS11 family. In terms of assembly, part of the 30S ribosomal subunit. Interacts with proteins S7 and S18. Binds to IF-3.

Functionally, located on the platform of the 30S subunit, it bridges several disparate RNA helices of the 16S rRNA. Forms part of the Shine-Dalgarno cleft in the 70S ribosome. The sequence is that of Small ribosomal subunit protein uS11 from Desulfovibrio desulfuricans (strain ATCC 27774 / DSM 6949 / MB).